A 313-amino-acid polypeptide reads, in one-letter code: Protein FixB (313 aa).

255 to 283 (LYLAVGISGQIQHMVGANASQTIFAINKD) is a binding site for FAD.

The protein belongs to the ETF alpha-subunit/FixB family. In terms of assembly, heterodimer of FixA and FixB.

It participates in amine and polyamine metabolism; carnitine metabolism. In terms of biological role, required for anaerobic carnitine reduction. May bring reductant to CaiA. In Escherichia coli O127:H6 (strain E2348/69 / EPEC), this protein is Protein FixB.